The chain runs to 250 residues: Ubiquinone/menaquinone biosynthesis C-methyltransferase UbiE (250 aa).

Residues Ser73, Asp94, and 122 to 123 (NA) contribute to the S-adenosyl-L-methionine site.

Belongs to the class I-like SAM-binding methyltransferase superfamily. MenG/UbiE family.

It catalyses the reaction a 2-demethylmenaquinol + S-adenosyl-L-methionine = a menaquinol + S-adenosyl-L-homocysteine + H(+). It carries out the reaction a 2-methoxy-6-(all-trans-polyprenyl)benzene-1,4-diol + S-adenosyl-L-methionine = a 5-methoxy-2-methyl-3-(all-trans-polyprenyl)benzene-1,4-diol + S-adenosyl-L-homocysteine + H(+). Its pathway is quinol/quinone metabolism; menaquinone biosynthesis; menaquinol from 1,4-dihydroxy-2-naphthoate: step 2/2. It participates in cofactor biosynthesis; ubiquinone biosynthesis. Functionally, methyltransferase required for the conversion of demethylmenaquinol (DMKH2) to menaquinol (MKH2) and the conversion of 2-polyprenyl-6-methoxy-1,4-benzoquinol (DDMQH2) to 2-polyprenyl-3-methyl-6-methoxy-1,4-benzoquinol (DMQH2). The protein is Ubiquinone/menaquinone biosynthesis C-methyltransferase UbiE of Legionella pneumophila (strain Paris).